Reading from the N-terminus, the 1287-residue chain is MVARSTDSLDGPGEGSVQPLPTAGGPSVKGKPGKRLSAPRGPFPRLADCAHFHYENVDFGHIQLLLSPDREGPSLSGENELVFGVQVTCQGRSWPVLRSYDDFRSLDAHLHRCIFDRRFSCLPELPPPPEGARAAQMLVPLLLQYLETLSGLVDSNLNCGPVLTWMELDNHGRRLLLSEEASLNIPAVAAAHVIKRYTAQAPDELSFEVGDIVSVIDMPPTEDRSWWRGKRGFQVGFFPSECVELFTERPGPGLKADADGPPCGIPAPQGISSLTSAVPRPRGKLAGLLRTFMRSRPSRQRLRQRGILRQRVFGCDLGEHLSNSGQDVPQVLRCCSEFIEAHGVVDGIYRLSGVSSNIQRLRHEFDSERIPELSGPAFLQDIHSVSSLCKLYFRELPNPLLTYQLYGKFSEAMSVPGEEERLVRVHDVIQQLPPPHYRTLEYLLRHLARMARHSANTSMHARNLAIVWAPNLLRSMELESVGMGGAAAFREVRVQSVVVEFLLTHVDVLFSDTFTSAGLDPAGRCLLPRPKSLAGSCPSTRLLTLEEAQARTQGRLGTPTEPTTPKAPASPAERRKGERGEKQRKPGGSSWKTFFALGRGPSVPRKKPLPWLGGTRAPPQPSGSRPDTVTLRSAKSEESLSSQASGAGLQRLHRLRRPHSSSDAFPVGPAPAGSCESLSSSSSSESSSSESSSSSSESSAAGLGALSGSPSHRTSAWLDDGDELDFSPPRCLEGLRGLDFDPLTFRCSSPTPGDPAPPASPAPPAPASAFPPRVTPQAISPRGPTSPASPAALDISEPLAVSVPPAVLELLGAGGAPASATPTPALSPGRSLRPHLIPLLLRGAEAPLTDACQQEMCSKLRGAQGPLGPDMESPLPPPPLSLLRPGGAPPPPPKNPARLMALALAERAQQVAEQQSQQECGGTPPASQSPFHRSLSLEVGGEPLGTSGSGPPPNSLAHPGAWVPGPPPYLPRQQSDGSLLRSQRPMGTSRRGLRGPAQVSAQLRAGGGGRDAPEAAAQSPCSVPSQVPTPGFFSPAPRECLPPFLGVPKPGLYPLGPPSFQPSSPAPVWRSSLGPPAPLDRGENLYYEIGASEGSPYSGPTRSWSPFRSMPPDRLNASYGMLGQSPPLHRSPDFLLSYPPAPSCFPPDHLGYSAPQHPARRPTPPEPLYVNLALGPRGPSPASSSSSSPPAHPRSRSDPGPPVPRLPQKQRAPWGPRTPHRVPGPWGPPEPLLLYRAAPPAYGRGGELHRGSLYRNGGQRGEGAGPPPPYPTPSWSLHSEGQTRSYC.

Residues 1-40 (MVARSTDSLDGPGEGSVQPLPTAGGPSVKGKPGKRLSAPR) are disordered. Residue S8 is modified to Phosphoserine. The region spanning 59–168 (FGHIQLLLSP…CGPVLTWMEL (110 aa)) is the PX; atypical domain. The SH3 domain maps to 186-248 (PAVAAAHVIK…PSECVELFTE (63 aa)). The Rho-GAP domain occupies 315–510 (CDLGEHLSNS…FLLTHVDVLF (196 aa)). Disordered regions lie at residues 551–792 (RTQG…SPAA), 813–832 (AGGAPASATPTPALSPGRSL), 859–1030 (KLRG…VPTP), 1056–1075 (GPPSFQPSSPAPVWRSSLGP), 1090–1134 (GASE…SPDF), and 1146–1287 (PPDH…RSYC). A compositionally biased stretch (low complexity) spans 558–571 (TPTEPTTPKAPASP). A Phosphoserine modification is found at S570. A compositionally biased stretch (basic and acidic residues) spans 572-584 (AERRKGERGEKQR). Residues 622-645 (SGSRPDTVTLRSAKSEESLSSQAS) are compositionally biased toward polar residues. Residue S636 is modified to Phosphoserine. Low complexity predominate over residues 672–709 (AGSCESLSSSSSSESSSSESSSSSSESSAAGLGALSGS). Phosphoserine is present on S727. Residues 752-766 (PGDPAPPASPAPPAP) show a composition bias toward pro residues. 2 stretches are compositionally biased toward low complexity: residues 813-829 (AGGAPASATPTPALSPG) and 896-919 (PARLMALALAERAQQVAEQQSQQE). 2 stretches are compositionally biased toward polar residues: residues 972-981 (RQQSDGSLLR) and 1019-1028 (SPCSVPSQVP). The residue at position 1169 (Y1169) is a Phosphotyrosine. Residues 1175–1189 (GPRGPSPASSSSSSP) show a composition bias toward low complexity. R1244 bears the Omega-N-methylarginine mark. A compositionally biased stretch (polar residues) spans 1274–1287 (SWSLHSEGQTRSYC).

It belongs to the PX domain-containing GAP family. In terms of assembly, specifically interacts with CDC42 and RHOQ/TC10 through its Rho-GAP domain. Interacts with NEK6.

May be involved in several stages of intracellular trafficking. Could play an important role in the regulation of glucose transport by insulin. May act as a downstream effector of RHOQ/TC10 in the regulation of insulin-stimulated glucose transport. In Homo sapiens (Human), this protein is Rho GTPase-activating protein 33 (ARHGAP33).